A 69-amino-acid polypeptide reads, in one-letter code: Conotoxin Eb6.19 (69 aa).

Positions 1–17 are cleaved as a signal peptide; sequence VLIIAVLFLTACQLTTA. Positions 18–41 are excised as a propeptide; it reads ETYSRGRQKHRARRSTDKNSKWTR. Disulfide bonds link cysteine 43–cysteine 57, cysteine 50–cysteine 61, and cysteine 56–cysteine 68.

It belongs to the conotoxin O1 superfamily. Expressed by the venom duct.

It is found in the secreted. This Conus ebraeus (Hebrew cone) protein is Conotoxin Eb6.19 (E1).